Here is a 519-residue protein sequence, read N- to C-terminus: MTKWSPNGNPLSTIYLILSLFTLAHTAPTTQHSRTTTQLRLEDEDGGGGVDEDSIHFVKGQMEKYGYLKGIDHSSPQEFRQALMFFQEVLEVEQTGNVDEMTVEAASKPRCTQTDVRQEQTKRTKRFTLSKRAKWAHASGQSVTLKWYISDYTSDIDRLETRKVVEKAFKLWSSQSYIKNEKKVTLTFQEASSKDEADINILWAEGNHGDEHDFDGANGKIEGNKKENVLAHTFFPGYARPLNGDIHFDDAEDWEIDVDQVGHGSNKRFFPYVLAHEIGHALGLDHSQKADALMHPYYKNVPINEIQLDIDDKCGVIWNYGGASDFCLYVWLMSQIVEAHNSSAQNNHGVGSITSSRTNKKSFKSEGFFLFQLKFPHSTLTHTDDVVMREKDKRSYRGDSKIPKCSSNNSSQRTLAEKKLTLGLHLSEADAKRYTEMVCNFLAGLHMWRTNPNHHASESLEKEYKGVSQEMGTFSGKSIAVRRLIRHAEHQKERSEKGPLDPDYFDDDFFENFFMEYSK.

An N-terminal signal peptide occupies residues 1-26; that stretch reads MTKWSPNGNPLSTIYLILSLFTLAHT. A propeptide spans 27–126 (activation peptide); sequence APTTQHSRTT…RQEQTKRTKR (100 aa). Polar residues predominate over residues 29–39; sequence TTQHSRTTTQL. A disordered region spans residues 29 to 50; sequence TTQHSRTTTQLRLEDEDGGGGV. The short motif at 109–116 is the Cysteine switch element; sequence PRCTQTDV. Cys111, His208, Asp210, His232, His247, and His276 together coordinate Zn(2+). Glu277 is an active-site residue. Zn(2+) contacts are provided by His280 and His286. An N-linked (GlcNAc...) asparagine glycan is attached at Asn341. A compositionally biased stretch (basic and acidic residues) spans 391–402; the sequence is KDKRSYRGDSKI. Residues 391 to 410 are disordered; that stretch reads KDKRSYRGDSKIPKCSSNNS. N-linked (GlcNAc...) asparagine glycosylation occurs at Asn408.

The protein belongs to the peptidase M10A family. It depends on Zn(2+) as a cofactor. As to expression, expressed in spermatheca and spermathecal-uterine valve, weakly in vulva and anal muscles and in two cells in the head (probably RMEV and RMED motor neurons).

It is found in the secreted. The protein localises to the extracellular space. The protein resides in the extracellular matrix. With respect to regulation, inhibited by human TIMP1 and TIMP2 and the broad MMP inhibitors BB94 (Batimastat) and CT543. Functionally, metalloprotease involved in molting, a process during larval stages in which a new cuticle is formed and the old cuticle is shed. Plays a role in thermotolerance probably by preventing the accumulation of oxidized lipoproteins and cholesterol. The protein is Matrix metalloproteinase-B of Caenorhabditis elegans.